The chain runs to 144 residues: Large ribosomal subunit protein uL15 (144 aa).

The span at 1–10 shows a compositional bias: basic and acidic residues; that stretch reads MKLHELKPAE. The disordered stretch occupies residues 1-52; the sequence is MKLHELKPAEGSRQVRNRVGRGTSSGNGKTAGRGQKGQKARGKVRLGFEGGQ. The span at 23–35 shows a compositional bias: gly residues; sequence TSSGNGKTAGRGQ.

This sequence belongs to the universal ribosomal protein uL15 family. As to quaternary structure, part of the 50S ribosomal subunit.

In terms of biological role, binds to the 23S rRNA. In Ligilactobacillus salivarius (strain UCC118) (Lactobacillus salivarius), this protein is Large ribosomal subunit protein uL15.